Consider the following 166-residue polypeptide: Sec-independent protein translocase protein TatB (166 aa).

Residues 1–21 form a helical membrane-spanning segment; sequence MIDIAFSKLAIIGVAALVFIG. Residues 85–146 form a disordered region; it reads DSSLHSAWDE…SGQKSRVISG (62 aa).

It belongs to the TatB family. As to quaternary structure, the Tat system comprises two distinct complexes: a TatABC complex, containing multiple copies of TatA, TatB and TatC subunits, and a separate TatA complex, containing only TatA subunits. Substrates initially bind to the TatABC complex, which probably triggers association of the separate TatA complex to form the active translocon.

The protein resides in the cell inner membrane. Its function is as follows. Part of the twin-arginine translocation (Tat) system that transports large folded proteins containing a characteristic twin-arginine motif in their signal peptide across membranes. Together with TatC, TatB is part of a receptor directly interacting with Tat signal peptides. TatB may form an oligomeric binding site that transiently accommodates folded Tat precursor proteins before their translocation. This chain is Sec-independent protein translocase protein TatB, found in Herminiimonas arsenicoxydans.